A 176-amino-acid polypeptide reads, in one-letter code: MSNYRRDFTKGGLYFFTIVLQDRTKSYLTDYINEFRSAYKQTCEHYPFETVAICILPDHIHLLMQLPENDDNYAIRIAYLKTQFTRQLPKECRQFNKNRQKYRESGIWQRRFWEHLIRDDKDLANHLDYIYYNPVKHGYVEVVKDWPYSSFHRDVKAEIYPEDWGGNPDLKIKGDI.

The Mg(2+) site is built by H59 and H61. Y148 serves as the catalytic Nucleophile.

The protein belongs to the transposase 17 family. RAYT subfamily. As to quaternary structure, homodimer. It depends on Mg(2+) as a cofactor.

Its function is as follows. Transposase responsible for transposition an insertion sequence (IS) element. Transposition occurs in 2 main steps, excision from the donor DNA 'top strand' into a single strand circle and its subsequent reinsertion into the DNA target. This increases the copy number of the IS. In Haemophilus influenzae (strain ATCC 51907 / DSM 11121 / KW20 / Rd), this protein is Putative REP-associated tyrosine transposase.